Reading from the N-terminus, the 104-residue chain is DNA-directed RNA polymerase subunit Rpo13 (104 aa).

Disordered stretches follow at residues 1-34 and 76-104; these read MVSG…EEFP and EKRD…SVEG. A compositionally biased stretch (acidic residues) spans 7–31; it reads TEEEKEGTNDEEVSEEREVEETSEE. Glu-32 lines the DNA pocket. Residues 80-104 show a composition bias toward basic residues; the sequence is SRRKAKKAASKKVKKTKKKEKSVEG. The required to bind DNA stretch occupies residues 81–104; the sequence is RRKAKKAASKKVKKTKKKEKSVEG.

Belongs to the archaeal Rpo13 RNA polymerase subunit family. As to quaternary structure, part of the 13-subunit RNA polymerase complex. Rpo1N and Rpo5 form a cleft which docks Rpo13. Forms predominantly dimers in solution, although monomers and trimers can also be seen. Found associated with RNAP but also as a homodimer pool in the cytoplasm in vivo.

The protein resides in the cytoplasm. The enzyme catalyses RNA(n) + a ribonucleoside 5'-triphosphate = RNA(n+1) + diphosphate. In terms of biological role, DNA-dependent RNA polymerase (RNAP) catalyzes the transcription of DNA into RNA using the four ribonucleoside triphosphates as substrates. A molten-globule protein, it binds dsDNA in the RNAP, in vitro binds dsDNA but not ssDNA. Its position in RNAP implies it functions in both transcription initiation and elongation. The polypeptide is DNA-directed RNA polymerase subunit Rpo13 (Saccharolobus shibatae (strain ATCC 51178 / DSM 5389 / JCM 8931 / NBRC 15437 / B12) (Sulfolobus shibatae)).